We begin with the raw amino-acid sequence, 539 residues long: Membrane protein insertase YidC (539 aa).

A run of 5 helical transmembrane segments spans residues 6 to 26 (TLLV…WQVA), 341 to 361 (SVIQ…TFIV), 416 to 436 (LGGC…YWAL), 454 to 474 (LSAQ…MFLI), and 495 to 515 (PVMF…YWLV).

Belongs to the OXA1/ALB3/YidC family. Type 1 subfamily. In terms of assembly, interacts with the Sec translocase complex via SecD. Specifically interacts with transmembrane segments of nascent integral membrane proteins during membrane integration.

The protein localises to the cell inner membrane. Required for the insertion and/or proper folding and/or complex formation of integral membrane proteins into the membrane. Involved in integration of membrane proteins that insert both dependently and independently of the Sec translocase complex, as well as at least some lipoproteins. Aids folding of multispanning membrane proteins. This chain is Membrane protein insertase YidC, found in Vibrio vulnificus (strain YJ016).